A 418-amino-acid polypeptide reads, in one-letter code: Tyrosine--tRNA ligase 1 (418 aa).

Residue tyrosine 34 coordinates L-tyrosine. The short motif at 39-48 is the 'HIGH' region element; that stretch reads PTADSLHIGH. L-tyrosine is bound by residues tyrosine 169 and glutamine 173. The short motif at 230–234 is the 'KMSKS' region element; the sequence is KFGKT. Lysine 233 serves as a coordination point for ATP. Residues 352-418 enclose the S4 RNA-binding domain; that stretch reads TVLIDLLVES…GKKKYFLIRY (67 aa).

This sequence belongs to the class-I aminoacyl-tRNA synthetase family. TyrS type 1 subfamily. Homodimer.

The protein resides in the cytoplasm. It carries out the reaction tRNA(Tyr) + L-tyrosine + ATP = L-tyrosyl-tRNA(Tyr) + AMP + diphosphate + H(+). Functionally, catalyzes the attachment of tyrosine to tRNA(Tyr) in a two-step reaction: tyrosine is first activated by ATP to form Tyr-AMP and then transferred to the acceptor end of tRNA(Tyr). In Bacillus cereus (strain ATCC 10987 / NRS 248), this protein is Tyrosine--tRNA ligase 1.